The primary structure comprises 1040 residues: Multidrug resistance protein MdtB (1040 aa).

Transmembrane regions (helical) follow at residues 15–37 (LFIL…GIIG), 345–362 (FELM…YLFL), 367–389 (ATII…MVFL), 396–418 (LTLM…VIEN), 438–460 (GEIG…PLLF), 472–494 (FAVT…TPMM), 535–557 (HPWL…WITI), 867–889 (VWLI…ESFI), 909–931 (LIIA…IGIV), 968–990 (ILMT…GVGA), and 1000–1022 (MVGG…YLLF).

Belongs to the resistance-nodulation-cell division (RND) (TC 2.A.6) family. MdtB subfamily. As to quaternary structure, part of a tripartite efflux system composed of MdtA, MdtB and MdtC. MdtB forms a heteromultimer with MdtC.

The protein resides in the cell inner membrane. The chain is Multidrug resistance protein MdtB from Salmonella typhi.